We begin with the raw amino-acid sequence, 306 residues long: UDP-N-acetylenolpyruvoylglucosamine reductase (306 aa).

An FAD-binding PCMH-type domain is found at 34-199 (RVGGPAQLLF…TSVRLRGAIA (166 aa)). The active site involves arginine 179. Catalysis depends on serine 228, which acts as the Proton donor. Glutamate 298 is a catalytic residue.

Belongs to the MurB family. FAD serves as cofactor.

Its subcellular location is the cytoplasm. The catalysed reaction is UDP-N-acetyl-alpha-D-muramate + NADP(+) = UDP-N-acetyl-3-O-(1-carboxyvinyl)-alpha-D-glucosamine + NADPH + H(+). It participates in cell wall biogenesis; peptidoglycan biosynthesis. Cell wall formation. This Rhodopseudomonas palustris (strain BisA53) protein is UDP-N-acetylenolpyruvoylglucosamine reductase.